A 495-amino-acid chain; its full sequence is Transcription termination/antitermination protein NusA (495 aa).

The S1 motif domain occupies 135 to 200; the sequence is GKIVTGTVKK…KTAQLFVTRS (66 aa). A KH domain is found at 302–374; the sequence is NHSMDIAVEA…LDEEFAQILV (73 aa).

This sequence belongs to the NusA family. Monomer. Binds directly to the core enzyme of the DNA-dependent RNA polymerase and to nascent RNA.

It localises to the cytoplasm. Functionally, participates in both transcription termination and antitermination. The protein is Transcription termination/antitermination protein NusA of Haemophilus influenzae (strain ATCC 51907 / DSM 11121 / KW20 / Rd).